The following is a 136-amino-acid chain: Large-conductance mechanosensitive channel (136 aa).

2 consecutive transmembrane segments (helical) span residues F10 to G30 and G76 to I96.

This sequence belongs to the MscL family. As to quaternary structure, homopentamer.

It is found in the cell inner membrane. Channel that opens in response to stretch forces in the membrane lipid bilayer. May participate in the regulation of osmotic pressure changes within the cell. This is Large-conductance mechanosensitive channel from Escherichia coli O127:H6 (strain E2348/69 / EPEC).